Reading from the N-terminus, the 465-residue chain is Nucleolar and spindle-associated protein 1 (465 aa).

A coiled-coil region spans residues 32–61 (ADKLLRALKAHLKNEARKENENQDEIQTSA). 3 disordered regions span residues 44 to 123 (KNEA…QNHS), 148 to 207 (VEVP…TPNF), and 252 to 294 (GVPA…GSAK). The segment covering 56-75 (EIQTSASSCDEPEIQTSSQE) has biased composition (polar residues). A compositionally biased stretch (basic and acidic residues) spans 76–86 (QAEREPDDHVT). Residues 87–96 (KTRGRRKTVH) show a composition bias toward basic residues. Position 152 is a phosphoserine (Ser152). Positions 154–166 (PNESQGDENTVSS) are enriched in polar residues. The segment covering 169–179 (HGIDGNEDPRV) has biased composition (basic and acidic residues). Position 204 is a phosphothreonine (Thr204). Residues 262-405 (GRLSVACTPG…HKGKLKPWGQ (144 aa)) form an interaction with microtubules region. Ser265 carries the phosphoserine modification. Position 269 is a phosphothreonine (Thr269). Residues Ser272, Ser292, Ser299, and Ser334 each carry the phosphoserine modification. The disordered stretch occupies residues 308–338 (SAATKDNEHKRSLTKTPARKSPHVTTSVNTP). Thr337, Thr361, and Thr372 each carry phosphothreonine. Residues Ser375 and Ser386 each carry the phosphoserine modification. The interval 396 to 454 (HKGKLKPWGQSKENNSLHEHVNRVSFHKKTYKQPRLQTREEQRKKHERERKEKKEKVLG) is disordered. The KEN box signature appears at 407–413 (KENNSLH). Residues 430 to 457 (RLQTREEQRKKHERERKEKKEKVLGVRR) are a coiled coil. A compositionally biased stretch (basic and acidic residues) spans 432–453 (QTREEQRKKHERERKEKKEKVL).

Belongs to the NUSAP family. In terms of assembly, interacts with DNA and microtubules. Microtubule bundling is inhibited by IPO7, KPNA2 and KPNB1 while association with DNA is also inhibited by IPO7 and KPNA2. Post-translationally, ubiquitinated. Ubiquitination by FZR1 may lead to proteasome-dependent degradation of this protein.

The protein resides in the cytoplasm. It localises to the nucleus. It is found in the nucleolus. Its subcellular location is the cytoskeleton. The protein localises to the spindle. The protein resides in the chromosome. In terms of biological role, microtubule-associated protein with the capacity to bundle and stabilize microtubules. May associate with chromosomes and promote the organization of mitotic spindle microtubules around them. The protein is Nucleolar and spindle-associated protein 1 (NUSAP1) of Bos taurus (Bovine).